A 142-amino-acid chain; its full sequence is Hdr-like menaquinol oxidoreductase cytochrome c subunit (142 aa).

At 1–6 (MYNKKY) the chain is on the cytoplasmic side. A helical transmembrane segment spans residues 7–27 (VIPLILVFLIGFFTPYWYNAM). The Extracellular segment spans residues 28–142 (AGTLGHVPTL…GIEELSKYFS (115 aa)). Heme contacts are provided by C93, C96, H97, C104, C107, H108, C117, C120, and H121.

As to quaternary structure, consists of five subunits: an integral membrane subunit, a cytochrome b-like subunit, a cytochrome c subunit and two iron-sulfur subunits. Post-translationally, binds 3 heme groups per subunit.

It localises to the cell membrane. Has menaquinol-oxidizing activity. HmeA, HmeB and HmeE subunits may together catalyze electron transfer from menaquinol to cytochrome c. This Archaeoglobus fulgidus (strain ATCC 49558 / DSM 4304 / JCM 9628 / NBRC 100126 / VC-16) protein is Hdr-like menaquinol oxidoreductase cytochrome c subunit (hmeE).